The primary structure comprises 1439 residues: Myomesin-3 (1439 aa).

A disordered region spans residues 1–57 (MTLPHSPGSAGEPQASQTVQVHRLEHRQEEEQKEERQHSLQMGSSVQRRTYRSSEEE). Residues 22 to 38 (HRLEHRQEEEQKEERQH) are compositionally biased toward basic and acidic residues. Positions 39-48 (SLQMGSSVQR) are enriched in polar residues. Residues 119–149 (QRLLRQRRDWKALRQRTEEKVREAKELIELC) adopt a coiled-coil conformation. 2 consecutive Ig-like C2-type domains span residues 154-246 (PWFW…AKVL) and 269-362 (PSAE…AYVF). Fibronectin type-III domains follow at residues 376–471 (SPLN…TGDY), 504–599 (APTN…LKGK), 605–698 (PPAQ…VKQA), 704–799 (APYD…CKEW), and 806–901 (PPYD…LEDK). Ig-like C2-type domains follow at residues 1122 to 1207 (PYFQ…LDLT) and 1336 to 1425 (AKVV…VTIS).

Homodimer. As to expression, mainly expressed in slow muscle, extraocular muscle and embryonic/neonatal skeletal muscle (at protein level). Expression in skeletal muscle is fiber type specific, with the highest levels in type IIA fibers (intermediate speed) and lower levels in type I fibers.

Its subcellular location is the cytoplasm. It localises to the myofibril. The protein localises to the sarcomere. The protein resides in the m line. Its function is as follows. May link the intermediate filament cytoskeleton to the M-disk of the myofibrils in striated muscle. This is Myomesin-3 (Myom3) from Mus musculus (Mouse).